The following is a 1108-amino-acid chain: Isoleucine--tRNA ligase (1108 aa).

The 'HIGH' region motif lies at 53 to 63 (PFANGLPHYGH). The 'KMSKS' region signature appears at 654-658 (KLSKR). Residue Lys-657 coordinates ATP.

The protein belongs to the class-I aminoacyl-tRNA synthetase family. IleS type 2 subfamily. As to quaternary structure, monomer. It depends on Zn(2+) as a cofactor.

Its subcellular location is the cytoplasm. The catalysed reaction is tRNA(Ile) + L-isoleucine + ATP = L-isoleucyl-tRNA(Ile) + AMP + diphosphate. Its function is as follows. Catalyzes the attachment of isoleucine to tRNA(Ile). As IleRS can inadvertently accommodate and process structurally similar amino acids such as valine, to avoid such errors it has two additional distinct tRNA(Ile)-dependent editing activities. One activity is designated as 'pretransfer' editing and involves the hydrolysis of activated Val-AMP. The other activity is designated 'posttransfer' editing and involves deacylation of mischarged Val-tRNA(Ile). The polypeptide is Isoleucine--tRNA ligase (Rickettsia bellii (strain OSU 85-389)).